A 371-amino-acid polypeptide reads, in one-letter code: Ferredoxin--NADP reductase, apicoplast (371 aa).

An apicoplast-targeting transit peptide spans methionine 1–cysteine 18. Residues lysine 68, alanine 155 to serine 159, alanine 172 to glutamate 179, tyrosine 192 to serine 194, and threonine 235 each bind FAD. The FAD-binding FR-type domain occupies lysine 68 to proline 218. Lysine 174 contacts NADP(+). Residues valine 272–tyrosine 273, serine 302, tyrosine 313–glutamine 315, and histidine 341–serine 343 contribute to the NADP(+) site. Residues lysine 342 and tyrosine 371 each coordinate FAD.

This sequence belongs to the ferredoxin--NADP reductase type 1 family. As to quaternary structure, monomer. Homodimer; disulfide linked. NADP binding accelerates formation of an inactive, disulfide-linked homodimer when the protein is exposed to air for 24 hours or more (in vitro); the physiological relevance of this is uncertain. The cofactor is FAD.

Its subcellular location is the plastid. It is found in the apicoplast. It carries out the reaction 2 reduced [2Fe-2S]-[ferredoxin] + NADP(+) + H(+) = 2 oxidized [2Fe-2S]-[ferredoxin] + NADPH. In terms of biological role, may play a role in the terminal step of the DOXP/MEP pathway for isoprenoid precursor biosynthesis. The protein is Ferredoxin--NADP reductase, apicoplast of Plasmodium falciparum (isolate 3D7).